The sequence spans 83 residues: MVVIRLARGGSKHRPFFNIVVADKRVRRDGRFIERIGFYNPIAKGGEEGLRIAQDRLTHWLGVGAQPSPTVERLVKQGAAKAA.

It belongs to the bacterial ribosomal protein bS16 family.

This chain is Small ribosomal subunit protein bS16, found in Polaromonas sp. (strain JS666 / ATCC BAA-500).